The primary structure comprises 103 residues: Histone H4 (103 aa).

A compositionally biased stretch (gly residues) spans 1 to 14 (MTGRGKGGKGLGKG). The segment at 1-20 (MTGRGKGGKGLGKGGAKRHR) is disordered. T2 is modified (N-acetylthreonine). K6 is subject to N6-acetyl-N6-methyllysine; alternate. N6-acetyllysine is present on residues K6, K9, K13, and K17. An N6-acetyl-N6-methyllysine; alternate modification is found at K13. Position 21 is an N6,N6-dimethyllysine (K21). At K32 the chain carries N6-methyllysine.

Belongs to the histone H4 family. In terms of assembly, the nucleosome is a histone octamer containing two molecules each of H2A, H2B, H3 and H4 assembled in one H3-H4 heterotetramer and two H2A-H2B heterodimers. The octamer wraps approximately 147 bp of DNA.

The protein localises to the nucleus. It is found in the chromosome. Core component of nucleosome. Nucleosomes wrap and compact DNA into chromatin, limiting DNA accessibility to the cellular machineries which require DNA as a template. Histones thereby play a central role in transcription regulation, DNA repair, DNA replication and chromosomal stability. DNA accessibility is regulated via a complex set of post-translational modifications of histones, also called histone code, and nucleosome remodeling. In terms of biological role, a mixture of histones H2B and H4 has antimicrobial activity against the Gram-positive bacterium M.luteus. The sequence is that of Histone H4 from Penaeus vannamei (Whiteleg shrimp).